The following is a 109-amino-acid chain: MKIRPGENLSRLTNMKKLSQNLIHNVTSIMTVSDINYLLLYLIILLTLSIKQPEKKNRKERTSCILSYYRIASLSMQNGGVPLCFVVLDCRLDSVFCKHGTMQFYWRKT.

A helical membrane pass occupies residues 26–48 (VTSIMTVSDINYLLLYLIILLTL).

The protein localises to the membrane. This is an uncharacterized protein from Saccharomyces cerevisiae (strain ATCC 204508 / S288c) (Baker's yeast).